Reading from the N-terminus, the 359-residue chain is Guanine nucleotide-binding protein subunit alpha-11 (359 aa).

Residues C9 and C10 are each lipidated (S-palmitoyl cysteine). A G-alpha domain is found at 38–359 (RELKLLLLGT…QLNLKEYNLV (322 aa)). Residues 41 to 54 (KLLLLGTGESGKST) form a G1 motif region. Residues 46–53 (GTGESGKS) and 180–183 (LRVR) each bind GTP. S53 serves as a coordination point for Mg(2+). The segment at 178-186 (DVLRVRVPT) is G2 motif. Mg(2+) is bound at residue T186. The G3 motif stretch occupies residues 201-210 (FRMVDVGGQR). Q209 carries the post-translational modification Deamidated glutamine; by Photorhabdus PAU_02230. The segment at 270–277 (ILFLNKKD) is G4 motif. GTP-binding positions include 274 to 277 (NKKD) and A331. A G5 motif region spans residues 329-334 (TCATDT).

It belongs to the G-alpha family. G(q) subfamily. In terms of assembly, g proteins are composed of 3 units; alpha, beta and gamma. The alpha chain contains the guanine nucleotide binding site. Interacts with RGS22. Interacts with NTSR1. (Microbial infection) Interacts with human cytomegalovirus (HHV-5) US28. Post-translationally, (Microbial infection) Deamidated at Gln-209 by Photorhabdus asymbiotica toxin PAU_02230, blocking GTP hydrolysis of heterotrimeric GNAQ or GNA11 and G-alphai (GNAI1, GNAI2 or GNAI3) proteins, thereby activating RhoA. As to expression, expressed in testis.

The protein resides in the cell membrane. It is found in the cytoplasm. It carries out the reaction GTP + H2O = GDP + phosphate + H(+). Guanine nucleotide-binding proteins (G proteins) function as transducers downstream of G protein-coupled receptors (GPCRs) in numerous signaling cascades. The alpha chain contains the guanine nucleotide binding site and alternates between an active, GTP-bound state and an inactive, GDP-bound state. Signaling by an activated GPCR promotes GDP release and GTP binding. The alpha subunit has a low GTPase activity that converts bound GTP to GDP, thereby terminating the signal. Both GDP release and GTP hydrolysis are modulated by numerous regulatory proteins. Signaling is mediated via phospholipase C-beta-dependent inositol lipid hydrolysis for signal propagation: activates phospholipase C-beta: following GPCR activation, GNA11 activates PLC-beta (PLCB1, PLCB2, PLCB3 or PLCB4), leading to production of diacylglycerol (DAG) and inositol 1,4,5-trisphosphate (IP3). Transduces FFAR4 signaling in response to long-chain fatty acids (LCFAs). Together with GNAQ, required for heart development. In the respiratory epithelium, transmits OXGR1-dependent signals that lead to downstream intracellular Ca(2+) release and mucocilliary clearance of airborne pathogens. This chain is Guanine nucleotide-binding protein subunit alpha-11 (GNA11), found in Homo sapiens (Human).